The chain runs to 324 residues: Melanoma-associated antigen B16 (324 aa).

Residues 1-15 (MSQDQESPRCTHDQH) are compositionally biased toward basic and acidic residues. Disordered stretches follow at residues 1-22 (MSQD…FSET) and 39-108 (LSSS…PRNV). Positions 70–81 (SSSIAVTTTSSS) are enriched in low complexity. Residues 82-95 (ESDEASSNQEEEDS) are compositionally biased toward acidic residues. Residues 113–312 (LDQKVAFLVN…HSFPSQYAEA (200 aa)) enclose the MAGE domain.

The protein is Melanoma-associated antigen B16 (MAGEB16) of Homo sapiens (Human).